A 63-amino-acid chain; its full sequence is Megourin-3 (63 aa).

As to quaternary structure, monomer. In terms of processing, contains four disulfide bonds.

The protein localises to the secreted. Its function is as follows. Has antimicrobial activity against Gram-positive bacteria and fungi. This Megoura viciae (Vetch aphid) protein is Megourin-3.